Consider the following 245-residue polypeptide: NAD-dependent protein deacetylase (245 aa).

Residues 1-245 (MIFVQQFEEV…EFVEGLSSRK (245 aa)) enclose the Deacetylase sirtuin-type domain. Residues alanine 26, threonine 30, phenylalanine 37, arginine 38, glutamine 105, isoleucine 107, aspartate 108, and histidine 123 each contribute to the NAD(+) site. Phenylalanine 37 is a nicotinamide binding site. Positions 107 and 108 each coordinate nicotinamide. The Proton acceptor role is filled by histidine 123. Cysteine 131, cysteine 134, cysteine 151, and cysteine 154 together coordinate Zn(2+). Residues threonine 190, serine 191, asparagine 216, and isoleucine 234 each contribute to the NAD(+) site.

The protein belongs to the sirtuin family. Class U subfamily. Zn(2+) serves as cofactor.

Its subcellular location is the cytoplasm. It carries out the reaction N(6)-acetyl-L-lysyl-[protein] + NAD(+) + H2O = 2''-O-acetyl-ADP-D-ribose + nicotinamide + L-lysyl-[protein]. In terms of biological role, NAD-dependent protein deacetylase which modulates the activities of several enzymes which are inactive in their acetylated form. The protein is NAD-dependent protein deacetylase of Bacillus cereus (strain ZK / E33L).